The chain runs to 498 residues: Myocyte-specific enhancer factor 2D homolog (498 aa).

Residues 1-100 (MGRKKIQIQR…KGFNGCDSPE (100 aa)) form an interaction with hdac9 region. The 55-residue stretch at 3–57 (RKKIQIQRITDERNRQVTFTKRKFGLMKKAYELSVLCDCEIALIIFNHSNKLFQY) folds into the MADS-box domain. A DNA-binding region (mef2-type) is located at residues 58 to 86 (ASTDMDKVLLKYTEYNEPHESRTNADIIE). Disordered stretches follow at residues 173-215 (LTDP…NSNG), 243-267 (LGKV…NSRK), and 411-498 (SIKR…AWVT). Residues 412-424 (IKREPASPNRERS) show a composition bias toward basic and acidic residues. 2 stretches are compositionally biased toward polar residues: residues 425–434 (TGTPLSCFSH) and 447–457 (DSLSSNASSFE).

It belongs to the MEF2 family. As to quaternary structure, binds DNA as a multimer, probably as a dimer. Interacts with hdac9. In terms of tissue distribution, restricted to the somitic mesoderm of early embryos and to the body muscle (myotomes) of the tadpole. Expressed in all tissues examined in the adult.

The protein localises to the nucleus. Its function is as follows. May regulate muscle-specific transcription in the embryo and may regulate transcription of a variety of cell types in the adult. It binds to the sequence 5'-CTA[TA]4TAR-3'. This is Myocyte-specific enhancer factor 2D homolog (mef2d) from Xenopus laevis (African clawed frog).